The primary structure comprises 371 residues: Chaperone protein DnaJ (371 aa).

In terms of domain architecture, J spans 5 to 70 (CYYEILNVSK…SKRSRYDQFG (66 aa)). The CR-type zinc finger occupies 127 to 204 (GVEKEITIPR…CYGNGKVKKQ (78 aa)). Cysteine 140, cysteine 143, cysteine 156, cysteine 159, cysteine 178, cysteine 181, cysteine 192, and cysteine 195 together coordinate Zn(2+). CXXCXGXG motif repeat units lie at residues 140–147 (CDSCDGTG), 156–163 (CHACHGQG), 178–185 (CPVCNGTG), and 192–199 (CDACYGNG).

It belongs to the DnaJ family. In terms of assembly, homodimer. Zn(2+) serves as cofactor.

It is found in the cytoplasm. In terms of biological role, participates actively in the response to hyperosmotic and heat shock by preventing the aggregation of stress-denatured proteins and by disaggregating proteins, also in an autonomous, DnaK-independent fashion. Unfolded proteins bind initially to DnaJ; upon interaction with the DnaJ-bound protein, DnaK hydrolyzes its bound ATP, resulting in the formation of a stable complex. GrpE releases ADP from DnaK; ATP binding to DnaK triggers the release of the substrate protein, thus completing the reaction cycle. Several rounds of ATP-dependent interactions between DnaJ, DnaK and GrpE are required for fully efficient folding. Also involved, together with DnaK and GrpE, in the DNA replication of plasmids through activation of initiation proteins. This chain is Chaperone protein DnaJ, found in Francisella tularensis subsp. tularensis (strain WY96-3418).